We begin with the raw amino-acid sequence, 567 residues long: MKQSKVFIPTMRDVPSEAEAQSHRLLLKSGLIKQSTSGIYSYLPLATRVLNNITAIVRQEMERIDSVEILMPALQQAELWEESGRWGAYGPELMRLQDRHGRQFALGPTHEELVTSIVRNELKSYKQLPMTLFQIQSKFRDEKRPRFGLLRGREFIMKDAYSFHADEASLDQTYQDMYQAYSRIFERVGINARPVVADSGAIGGSHTHEFMALSAIGEDTIVYSKESDYAANIEKAEVVYEPNHKHTTVQPLEKIETPNVKTAQELADFLGRPVDEIVKTMIFKVDGEYIMVLVRGHHEINDIKLKSYFGTDNIELATQDEIVNLVGANPGSLGPVIDKEIKIYADNFVQDLNNLVVGANEDGYHLINVNVGRDFNVDEYGDFRFILEGEKLSDGSGAAHFAEGIEVGQVFKLGTKYSESMNATFLDNQGKAQSLIMGCYGIGISRTLSAIVEQNHDDNGIVWPKSVTPFDLHLISINPKKDDQRELADALYAEFNTKFDVLYDDRQERAGVKFNDADLIGLPLRIVVGKRASEGIVEVKERLTGDSEEVHIDDLMTVITNKYDNLK.

This sequence belongs to the class-II aminoacyl-tRNA synthetase family. ProS type 1 subfamily. As to quaternary structure, homodimer.

The protein localises to the cytoplasm. The catalysed reaction is tRNA(Pro) + L-proline + ATP = L-prolyl-tRNA(Pro) + AMP + diphosphate. Its function is as follows. Catalyzes the attachment of proline to tRNA(Pro) in a two-step reaction: proline is first activated by ATP to form Pro-AMP and then transferred to the acceptor end of tRNA(Pro). As ProRS can inadvertently accommodate and process non-cognate amino acids such as alanine and cysteine, to avoid such errors it has two additional distinct editing activities against alanine. One activity is designated as 'pretransfer' editing and involves the tRNA(Pro)-independent hydrolysis of activated Ala-AMP. The other activity is designated 'posttransfer' editing and involves deacylation of mischarged Ala-tRNA(Pro). The misacylated Cys-tRNA(Pro) is not edited by ProRS. The polypeptide is Proline--tRNA ligase (Staphylococcus aureus (strain COL)).